Here is a 400-residue protein sequence, read N- to C-terminus: Unsaturated glucuronyl hydrolase (400 aa).

The signal sequence occupies residues 1-20; the sequence is MRKLVYLVLVLGLTFLNVRC. Asp-120 functions as the Nucleophile in the catalytic mechanism. The Proton donor role is filled by Asp-181.

The protein belongs to the glycosyl hydrolase 88 family.

The protein localises to the cell surface. Functionally, unsaturated glucuronyl hydrolase involved in ulvan degradation. Ulvan is the main polysaccharide component of the Ulvales (green seaweed) cell wall. It is composed of disaccharide building blocks comprising 3-sulfated rhamnose (Rha3S) linked to D-glucuronic acid (GlcA), L-iduronic acid (IduA), or D-xylose (Xyl). Unsaturated glucuronyl hydrolase catalyzes the cleavage of the unsaturated 4-deoxy-L-threo-hex-4-enopyranosiduronic acid (deltaUA) at the non-reducing end of ulvan oligomers, thus forming 5-dehydro-4-deoxy-D-glucuronate. This Formosa agariphila (strain DSM 15362 / KCTC 12365 / LMG 23005 / KMM 3901 / M-2Alg 35-1) protein is Unsaturated glucuronyl hydrolase.